The sequence spans 38 residues: Cytochrome b6-f complex subunit 5 (38 aa).

A helical membrane pass occupies residues 5-25 (LLLGIVLGLIPITLAGLFVAA).

It belongs to the PetG family. As to quaternary structure, the 4 large subunits of the cytochrome b6-f complex are cytochrome b6, subunit IV (17 kDa polypeptide, PetD), cytochrome f and the Rieske protein, while the 4 small subunits are PetG, PetL, PetM and PetN. The complex functions as a dimer.

The protein localises to the cellular thylakoid membrane. Its function is as follows. Component of the cytochrome b6-f complex, which mediates electron transfer between photosystem II (PSII) and photosystem I (PSI), cyclic electron flow around PSI, and state transitions. PetG is required for either the stability or assembly of the cytochrome b6-f complex. In Crocosphaera subtropica (strain ATCC 51142 / BH68) (Cyanothece sp. (strain ATCC 51142)), this protein is Cytochrome b6-f complex subunit 5.